The chain runs to 222 residues: uncharacterized protein (222 aa).

4 helical membrane passes run phenylalanine 23 to leucine 43, isoleucine 67 to leucine 87, isoleucine 157 to valine 177, and isoleucine 187 to tyrosine 207.

Belongs to the DedA family.

It localises to the cell membrane. This is an uncharacterized protein from Mycobacterium leprae (strain TN).